Consider the following 530-residue polypeptide: UDP-glucuronosyltransferase 2A3 (530 aa).

The first 23 residues, 1–23 (MAPGKLASAVLLLLLCCAGSGFC), serve as a signal peptide directing secretion. Over 24 to 494 (GKVLVWPCEM…SWFQYHSLDV (471 aa)) the chain is Extracellular. A glycan (N-linked (GlcNAc...) asparagine) is linked at Asn-316. The helical transmembrane segment at 495–515 (IGFLLACVASAILLVTKCCLF) threads the bilayer. Over 516-530 (SFQNFIKIGKRIKKE) the chain is Cytoplasmic.

The protein belongs to the UDP-glycosyltransferase family. As to expression, specifically expressed in liver and small intestine.

It is found in the membrane. It catalyses the reaction glucuronate acceptor + UDP-alpha-D-glucuronate = acceptor beta-D-glucuronoside + UDP + H(+). Functionally, UDP-glucuronosyltransferases catalyze phase II biotransformation reactions in which lipophilic substrates are conjugated with glucuronic acid to increase water solubility and enhance excretion. They are of major importance in the conjugation and subsequent elimination of potentially toxic xenobiotics and endogenous compounds. This chain is UDP-glucuronosyltransferase 2A3 (UGT2A3), found in Cavia porcellus (Guinea pig).